Consider the following 163-residue polypeptide: MSFNCSTRNCSSRPIGGRCIVPVAQVTTTSTTDADCLGGICLPSSFQTGSWLLDHCQETCCEPTACQPTCYRRTSCVSNPCQVTCSRQTTCISNPCSTTYSRPLTFVSSGCQPLGGISSVCQPVGGISTVCQPVGGVSTVCQPACGVSRTYQQSCVSSCRRTC.

Tandem repeats lie at residues 111–120 (CQPLGGISSV), 121–130 (CQPVGGISTV), 131–140 (CQPVGGVSTV), and 141–150 (CQPACGVSRT). Positions 111–150 (CQPLGGISSVCQPVGGISTVCQPVGGVSTVCQPACGVSRT) are 4 X 10 AA approximate repeats.

The protein belongs to the PMG family. Expressed in the upper matrix and in the entire hair cortex.

Its function is as follows. In the hair cortex, hair keratin intermediate filaments are embedded in an interfilamentous matrix, consisting of hair keratin-associated proteins (KRTAP), which are essential for the formation of a rigid and resistant hair shaft through their extensive disulfide bond cross-linking with abundant cysteine residues of hair keratins. The matrix proteins include the high-sulfur and high-glycine-tyrosine keratins. This is Keratin-associated protein 11-1 (KRTAP11-1) from Homo sapiens (Human).